Here is a 146-residue protein sequence, read N- to C-terminus: Hemoglobin subunit beta-1 (146 aa).

The region spanning 2–146 is the Globin domain; that stretch reads EWTDAEKSTI…VVAAMGSRYF (145 aa). Residues histidine 63 and histidine 92 each contribute to the heme b site.

This sequence belongs to the globin family. In terms of assembly, heterotetramer of two alpha chains and two beta chains. In terms of tissue distribution, red blood cells.

Functionally, involved in oxygen transport from gills to the various peripheral tissues. This Oncorhynchus mykiss (Rainbow trout) protein is Hemoglobin subunit beta-1 (hbb1).